The sequence spans 160 residues: Sec-independent protein translocase protein TatB (160 aa).

The chain crosses the membrane as a helical span at residues Met-1–Gly-21. Disordered regions lie at residues Ala-70–Thr-100 and Arg-133–Phe-160. A compositionally biased stretch (polar residues) spans Ser-89–Thr-100.

Belongs to the TatB family. As to quaternary structure, the Tat system comprises two distinct complexes: a TatABC complex, containing multiple copies of TatA, TatB and TatC subunits, and a separate TatA complex, containing only TatA subunits. Substrates initially bind to the TatABC complex, which probably triggers association of the separate TatA complex to form the active translocon.

Its subcellular location is the cell inner membrane. Its function is as follows. Part of the twin-arginine translocation (Tat) system that transports large folded proteins containing a characteristic twin-arginine motif in their signal peptide across membranes. Together with TatC, TatB is part of a receptor directly interacting with Tat signal peptides. TatB may form an oligomeric binding site that transiently accommodates folded Tat precursor proteins before their translocation. This is Sec-independent protein translocase protein TatB from Polaromonas sp. (strain JS666 / ATCC BAA-500).